Consider the following 72-residue polypeptide: Translation initiation factor IF-1 1 (72 aa).

The 72-residue stretch at 1 to 72 (MSKEDVIQMQ…TKGRIVFRAK (72 aa)) folds into the S1-like domain.

This sequence belongs to the IF-1 family. Component of the 30S ribosomal translation pre-initiation complex which assembles on the 30S ribosome in the order IF-2 and IF-3, IF-1 and N-formylmethionyl-tRNA(fMet); mRNA recruitment can occur at any time during PIC assembly.

The protein resides in the cytoplasm. In terms of biological role, one of the essential components for the initiation of protein synthesis. Stabilizes the binding of IF-2 and IF-3 on the 30S subunit to which N-formylmethionyl-tRNA(fMet) subsequently binds. Helps modulate mRNA selection, yielding the 30S pre-initiation complex (PIC). Upon addition of the 50S ribosomal subunit IF-1, IF-2 and IF-3 are released leaving the mature 70S translation initiation complex. This chain is Translation initiation factor IF-1 1, found in Thiobacillus denitrificans (strain ATCC 25259 / T1).